The sequence spans 934 residues: MTDYKSTLNLPQTSFAMKANLAQREPQTLKRWQKENLYQQIRQARAGREKFILHDGPPYANGEIHIGHAVNKILKDIIVKAKTLSGFDAPYIPGWDCHGLPIEHNVEKKVGKAGVKVDFATFRKKCREYAAKQVAGQKEGFVRLGVLADWDKPYLTMDYKTEADIVRALGKIVANGHLVRGFKPVYWSVVGGSALAEAEVEYQEKTSFSIDVKYAVKDEADFTQRVAELGGEGPVSVVIWTTTPWTLPSSQAVSLNADLEYVVVQQPGARLLVAEALLESVGKRAGIDTATIVGRCHGRDLENLVLQHPFYTREVPVILGDHVTTDAGTGCVHTAPDHGMEDFEVGSRYGIGTLNYVDENGLYRESVEIFAGDHVYKVDEKIIELLESRDALLHQEKFTHSYPHCWRTKTPLIFRATPQWFISMTKNGLLDTVKTAVDGVEWIPDWGEARMRSMLEASPDWCISRQRTWGVPIALFVHKETQDLHPDTPALVEKVAALIETDGMDAWFNLNPEEILGEDAANYSKVTDTLDVWFDSGVTHYSVIQQREELQYPADLYLEGSDQHRGWFQSSLKTAIAINGTAPYKQVLTHGFTVDANGKKMSKSIGNTVSPQKVMNELGADVLRLWVAATDFSGDMSVSDEILMRTADSYRRIRNTMRYFMSNLNGFDPAINSVAFDDMVALDRWAVDRAAKLQRDIVACYDSYQFHTIYQKIHNFCIVDMGGFYLDIIKDRVYTMQEDSRARRSAQTAQYLIVQALVRWIAPILSFTADEIWQALPGEKTGPVFVAEWLELPELSEDDALNNSYWQTAAKVKTAVNKVLESKRSSGVIGGSLGAEVTLYASDELHAKLNSLGEELRFVLLVSAVNLKKLDEAPEDADQVDVVGLKVAVTKSEAAKCARCWHQRDDVGSHSEHPELCGRCVSNVEGNGEVRHYA.

The 'HIGH' region signature appears at 58 to 68 (PYANGEIHIGH). E559 serves as a coordination point for L-isoleucyl-5'-AMP. The 'KMSKS' region signature appears at 600–604 (KMSKS). K603 contacts ATP. Zn(2+) contacts are provided by C897, C900, C917, and C920.

The protein belongs to the class-I aminoacyl-tRNA synthetase family. IleS type 1 subfamily. In terms of assembly, monomer. It depends on Zn(2+) as a cofactor.

The protein resides in the cytoplasm. It carries out the reaction tRNA(Ile) + L-isoleucine + ATP = L-isoleucyl-tRNA(Ile) + AMP + diphosphate. Functionally, catalyzes the attachment of isoleucine to tRNA(Ile). As IleRS can inadvertently accommodate and process structurally similar amino acids such as valine, to avoid such errors it has two additional distinct tRNA(Ile)-dependent editing activities. One activity is designated as 'pretransfer' editing and involves the hydrolysis of activated Val-AMP. The other activity is designated 'posttransfer' editing and involves deacylation of mischarged Val-tRNA(Ile). The sequence is that of Isoleucine--tRNA ligase from Teredinibacter turnerae (strain ATCC 39867 / T7901).